The primary structure comprises 910 residues: DNA mismatch repair protein MutS (910 aa).

Residues 1–15 show a composition bias toward polar residues; sequence MPRSAAQSEEQTLQG. Residues 1 to 94 are disordered; the sequence is MPRSAAQSEE…EPAWAHHSQV (94 aa). Low complexity predominate over residues 44-54; the sequence is DASLSADAAAR. 726–733 contributes to the ATP binding site; it reads GPNASGKS.

This sequence belongs to the DNA mismatch repair MutS family.

In terms of biological role, this protein is involved in the repair of mismatches in DNA. It is possible that it carries out the mismatch recognition step. This protein has a weak ATPase activity. The chain is DNA mismatch repair protein MutS from Synechococcus sp. (strain WH7803).